Reading from the N-terminus, the 133-residue chain is Fatty acid-binding protein, heart (133 aa).

Val-2 bears the N-acetylvaline mark. Thr-8 bears the Phosphothreonine mark. Position 20 is a phosphotyrosine; by Tyr-kinases (Tyr-20). At Ser-23 the chain carries Phosphoserine. Thr-30 carries the phosphothreonine modification. Ser-83 bears the Phosphoserine mark. 127 to 129 (RTY) contributes to the (9Z)-octadecenoate binding site. A hexadecanoate-binding site is contributed by 127–129 (RTY). 127-129 (RTY) lines the octadecanoate pocket.

This sequence belongs to the calycin superfamily. Fatty-acid binding protein (FABP) family.

It localises to the cytoplasm. In terms of biological role, FABPs are thought to play a role in the intracellular transport of long-chain fatty acids and their acyl-CoA esters. The sequence is that of Fatty acid-binding protein, heart (FABP3) from Bos mutus grunniens (Wild yak).